The primary structure comprises 313 residues: Ribosomal RNA small subunit methyltransferase H (313 aa).

S-adenosyl-L-methionine is bound by residues 37–39, Asp-57, Phe-82, Asp-104, and Gln-111; that span reads GGH.

Belongs to the methyltransferase superfamily. RsmH family.

The protein localises to the cytoplasm. The enzyme catalyses cytidine(1402) in 16S rRNA + S-adenosyl-L-methionine = N(4)-methylcytidine(1402) in 16S rRNA + S-adenosyl-L-homocysteine + H(+). Specifically methylates the N4 position of cytidine in position 1402 (C1402) of 16S rRNA. The chain is Ribosomal RNA small subunit methyltransferase H from Alteromonas mediterranea (strain DSM 17117 / CIP 110805 / LMG 28347 / Deep ecotype).